A 252-amino-acid chain; its full sequence is 5-oxoprolinase subunit A 1 (252 aa).

Belongs to the LamB/PxpA family. As to quaternary structure, forms a complex composed of PxpA, PxpB and PxpC.

It carries out the reaction 5-oxo-L-proline + ATP + 2 H2O = L-glutamate + ADP + phosphate + H(+). Functionally, catalyzes the cleavage of 5-oxoproline to form L-glutamate coupled to the hydrolysis of ATP to ADP and inorganic phosphate. In Pseudomonas aeruginosa (strain ATCC 15692 / DSM 22644 / CIP 104116 / JCM 14847 / LMG 12228 / 1C / PRS 101 / PAO1), this protein is 5-oxoprolinase subunit A 1.